The following is a 328-amino-acid chain: MSHLALQPGFDFQQAGKEVLEIEREGLAELDQYINQHFTLACEKMFNCTGKVVVMGMGKSGHIGRKMAATFASTGTSSFFVHPGEAAHGDLGMVTPQDVVIAISNSGESSEIAALIPVLKRLHVPLICITGRPESSMARAADVHLCVKVPKEACPLGLAPTSSTTATLVMGDALAVALLKARGFTAEDFALSHPGGALGRKLLLRVSDIMHTGDEIPHVNKHATLRDALLEITRKNLGMTVICDESMKIDGIFTDGDLRRVFDMGGDMRQLGIAEVMTPGGIRVRPGILAVDALNLMQSRHITSVLVADGDQLLGVLHMHDLLRAGVV.

The SIS domain occupies 41–184 (ACEKMFNCTG…AVALLKARGF (144 aa)). Residues 75–76 (GT), histidine 82, histidine 88, 114–123 (ALIPVLKRLH), and 148–150 (KVP) contribute to the substrate site. Histidine 82 is a Zn(2+) binding site. Residues 210-268 (MHTGDEIPHVNKHATLRDALLEITRKNLGMTVICDESMKIDGIFTDGDLRRVFDMGGDM) enclose the CBS 1 domain. Position 275 (glutamate 275) interacts with substrate. One can recognise a CBS 2 domain in the interval 277 to 328 (MTPGGIRVRPGILAVDALNLMQSRHITSVLVADGDQLLGVLHMHDLLRAGVV).

It belongs to the SIS family. GutQ/KpsF subfamily. As to quaternary structure, homotetramer.

The catalysed reaction is D-arabinose 5-phosphate = D-ribulose 5-phosphate. It participates in carbohydrate biosynthesis; 3-deoxy-D-manno-octulosonate biosynthesis; 3-deoxy-D-manno-octulosonate from D-ribulose 5-phosphate: step 1/3. It functions in the pathway bacterial outer membrane biogenesis; lipopolysaccharide biosynthesis. In terms of biological role, involved in the biosynthesis of 3-deoxy-D-manno-octulosonate (KDO), a unique 8-carbon sugar component of lipopolysaccharides (LPSs). Catalyzes the reversible aldol-ketol isomerization between D-ribulose 5-phosphate (Ru5P) and D-arabinose 5-phosphate (A5P). The polypeptide is Arabinose 5-phosphate isomerase KdsD (kdsD) (Salmonella typhimurium (strain LT2 / SGSC1412 / ATCC 700720)).